Here is a 330-residue protein sequence, read N- to C-terminus: Stomatin-1 (330 aa).

Polar residues predominate over residues 1–19 (MQPSETVEMQEMAQPSGQQ). The tract at residues 1–27 (MQPSETVEMQEMAQPSGQQRDVEARVQ) is disordered. The helical transmembrane segment at 42–62 (MFCIAMSYVLIFLTFPVSVFM) threads the bilayer.

It belongs to the band 7/mec-2 family.

It localises to the membrane. The sequence is that of Stomatin-1 (sto-1) from Caenorhabditis elegans.